We begin with the raw amino-acid sequence, 201 residues long: Elongation factor Ts (201 aa).

The interval T83–V86 is involved in Mg(2+) ion dislocation from EF-Tu.

It belongs to the EF-Ts family.

Its subcellular location is the cytoplasm. Associates with the EF-Tu.GDP complex and induces the exchange of GDP to GTP. It remains bound to the aminoacyl-tRNA.EF-Tu.GTP complex up to the GTP hydrolysis stage on the ribosome. This chain is Elongation factor Ts, found in Methylacidiphilum infernorum (isolate V4) (Methylokorus infernorum (strain V4)).